Here is a 316-residue protein sequence, read N- to C-terminus: 4-hydroxyphenylacetate decarboxylase activating enzyme (316 aa).

In terms of domain architecture, Radical SAM core spans 20–307 (HDGPGCRTTV…QDIFLDNGIA (288 aa)). [4Fe-4S] cluster is bound by residues cysteine 34, cysteine 38, cysteine 41, cysteine 60, cysteine 66, cysteine 69, and cysteine 105. Position 40-42 (40-42 (WCA)) interacts with S-adenosyl-L-methionine. One can recognise a 4Fe-4S ferredoxin-type domain in the interval 84–115 (NKPVIDWNICKDCESFECVNSCYYNAFKLCAK). Residues glycine 144, 193–195 (DIK), and histidine 267 contribute to the S-adenosyl-L-methionine site.

It belongs to the organic radical-activating enzymes family. As to quaternary structure, monomer. Requires [4Fe-4S] cluster as cofactor.

It carries out the reaction glycyl-[protein] + reduced [flavodoxin] + S-adenosyl-L-methionine = glycin-2-yl radical-[protein] + semiquinone [flavodoxin] + 5'-deoxyadenosine + L-methionine + H(+). In terms of biological role, catalyzes activation of 4-hydroxyphenylacetate decarboxylase under anaerobic conditions by generation of an organic free radical on a glycine residue, via a homolytic cleavage of S-adenosyl-L-methionine (SAM). In Clostridioides difficile (Peptoclostridium difficile), this protein is 4-hydroxyphenylacetate decarboxylase activating enzyme.